The following is a 74-amino-acid chain: MPVINIEDLTEKDKLKMEVDQLKKEVTLERMLVSKCCEEVRDYVEERSGEDPLVKGIPEDKNPFKELKGGCVIS.

Cysteine 71 carries the cysteine methyl ester modification. Cysteine 71 carries S-farnesyl cysteine lipidation. Positions 72-74 (VIS) are cleaved as a propeptide — removed in mature form.

It belongs to the G protein gamma family. As to quaternary structure, g proteins are composed of 3 units, alpha, beta and gamma. In terms of tissue distribution, retinal rod outer segment.

The protein resides in the cell membrane. Functionally, guanine nucleotide-binding proteins (G proteins) are involved as a modulator or transducer in various transmembrane signaling systems. The beta and gamma chains are required for the GTPase activity, for replacement of GDP by GTP, and for G protein-effector interaction. This is Guanine nucleotide-binding protein G(T) subunit gamma-T1 (GNGT1) from Canis lupus familiaris (Dog).